Reading from the N-terminus, the 269-residue chain is C-type lectin domain family 2 member G (269 aa).

Topologically, residues 1 to 107 are cytoplasmic; sequence MNITRASLPM…SPESSAKLYC (107 aa). The chain crosses the membrane as a helical; Signal-anchor for type II membrane protein span at residues 108 to 128; that stretch reads CCGVIMVLTVAVVALSVALPA. The Extracellular portion of the chain corresponds to 129–269; it reads TKTEQILINK…SLHCPTPVPV (141 aa). The 105-residue stretch at 150 to 254 folds into the C-type lectin domain; that stretch reads VGNKCFYFSE…HYIPRIWICS (105 aa). A glycan (N-linked (GlcNAc...) asparagine) is linked at asparagine 163. Cysteine 171 and cysteine 253 are disulfide-bonded.

As to expression, detected in vagina, eye, tongue, stomach and spleen.

The protein localises to the cell membrane. Functionally, inhibits osteoclast formation. In Mus musculus (Mouse), this protein is C-type lectin domain family 2 member G (Clec2g).